We begin with the raw amino-acid sequence, 145 residues long: Trafficking protein particle complex subunit 1 (145 aa).

This sequence belongs to the TRAPP small subunits family. BET5 subfamily. In terms of assembly, part of the multisubunit transport protein particle (TRAPP) complex. The heterodimer TRAPPC6B-TRAPPC3 interacts with TRAPPC1 likely providing a core for TRAPP complex formation.

The protein resides in the golgi apparatus. It is found in the cis-Golgi network. It localises to the endoplasmic reticulum. Its function is as follows. May play a role in vesicular transport from endoplasmic reticulum to Golgi. The protein is Trafficking protein particle complex subunit 1 of Mus musculus (Mouse).